We begin with the raw amino-acid sequence, 2812 residues long: Zonadhesin (2812 aa).

The N-terminal stretch at 1 to 17 (MVPPVWTLLLLVGAALF) is a signal peptide. The Extracellular portion of the chain corresponds to 18–2757 (RKEKPPDQKL…DAPPPRKPAS (2740 aa)). 3 MAM domains span residues 39–204 (TQCD…SCNR), 209–368 (QTCS…PCGE), and 371–536 (PQCD…TCPV). Residues 61 to 84 (EDWVRASGPSPTGSTGAPGGYPNG) form a disordered region. Positions 66–75 (ASGPSPTGST) are enriched in low complexity. Residues asparagine 333 and asparagine 493 are each glycosylated (N-linked (GlcNAc...) asparagine). Disordered regions lie at residues 545–884 (VSPV…PTEK) and 904–929 (EKPTISPEKPTISTEKPTIPTEKPTI). Residues 547–558 (PVSSTGPSETTG) are compositionally biased toward low complexity. Residues 559–570 (LTENPTISTKKP) show a composition bias toward polar residues. A 66 X heptapeptide repeats (approximate) (mucin-like domain) region spans residues 573–1041 (SIEKPSVTTE…GTTTTSRSST (469 aa)). Composition is skewed to low complexity over residues 592 to 603 (TIPTEKPTISTE), 651 to 675 (TEKPTVPTEEPTTPTEETTTSMEEP), 713 to 842 (SPEK…STEK), 853 to 868 (STEKPTIPTEKPTISP), and 916 to 929 (STEKPTIPTEKPTI). One can recognise a TIL 1 domain in the interval 1044 to 1093 (CPPNARYESCACPASCKSPRPSCGPLCREGCVCNPGFLFSDNHCIQASSC). One can recognise a VWFC 1 domain in the interval 1103-1148 (EPGAEWFSPNCTEHCRCWPGSRVECQISQCGTHTVCQLKNGQYGCH). Asparagine 1112 and asparagine 1188 each carry an N-linked (GlcNAc...) asparagine glycan. In terms of domain architecture, VWFD 1 spans 1154–1331 (ATCLVYGDPH…TDQDEDQECQ (178 aa)). Disulfide bonds link cysteine 1156/cysteine 1291 and cysteine 1178/cysteine 1330. A compositionally biased stretch (basic and acidic residues) spans 1302-1316 (HLKLDGSPAGDKEEL). Positions 1302–1323 (HLKLDGSPAGDKEELGNSWQTD) are disordered. The 54-residue stretch at 1426-1479 (CPPNSKYSLCAKPCPDTCHSGFSGMFCSDRCVEACECNPGFVLSGLECIPRSQC) folds into the TIL 2 domain. A VWFC 2 domain is found at 1480–1535 (GCLHPAGSYFKVGERWYKPGCKELCVCESNNRIRCQPWRCRAQEFCGQQDGIYGCH). Positions 1540 to 1720 (ATCTASGDPH…LPESSEPGCF (181 aa)) constitute a VWFD 2 domain. 2 disulfides stabilise this stretch: cysteine 1542-cysteine 1680 and cysteine 1564-cysteine 1719. 2 N-linked (GlcNAc...) asparagine glycosylation sites follow: asparagine 1685 and asparagine 1804. The 56-residue stretch at 1812 to 1867 (CPPGSSYSPCSSPCPDTCSSINNPRDCPKALPCAESCECQKGHILSGTSCVPLGQC) folds into the TIL 3 domain. The region spanning 1868-1924 (GCTDPAGSYHPVGERWYTENTCTRLCTCSVHNNITCFQSTCKPNQICWALDGLLHCR) is the VWFC 3 domain. 2 N-linked (GlcNAc...) asparagine glycosylation sites follow: asparagine 1900 and asparagine 1946. The VWFD 3 domain occupies 1929-2108 (GVCQLPGESH…KDKDIDPSCQ (180 aa)). 2 disulfide bridges follow: cysteine 1931–cysteine 2069 and cysteine 1953–cysteine 2107. A glycan (N-linked (GlcNAc...) asparagine) is linked at asparagine 2203. The TIL 4 domain occupies 2211–2267 (CPAYSSYTNCLPSCSPSCWDLDGRCEGAKVPSACAEGCICQPGYVLSEDKCVPRSQC). The 62-residue stretch at 2268 to 2329 (GCKDAHGGSI…NSNCVSDKSE (62 aa)) folds into the VWFC 4 domain. One can recognise a VWFD 4 domain in the interval 2329-2505 (EQCSVYGDPR…SWEVKTEDAL (177 aa)). Residues cysteine 2331 and cysteine 2468 are joined by a disulfide bond. N-linked (GlcNAc...) asparagine glycosylation is found at asparagine 2542 and asparagine 2701. A VWFC 5 domain is found at 2652-2797 (CGCTSNGIYY…KREKTQEGDR (146 aa)). Residues 2708–2744 (PESPCLQNPCQNDGQCREQGATFTCECEVGYGGGLCM) enclose the EGF-like domain. Cystine bridges form between cysteine 2712/cysteine 2723, cysteine 2717/cysteine 2732, and cysteine 2734/cysteine 2743. Residues 2758 to 2778 (NLVGVLLGLLVPVVVVLLAVT) form a helical membrane-spanning segment. The Cytoplasmic segment spans residues 2779–2812 (RECIYRTRRKREKTQEGDRLARLVDTDTVLDCAC).

As to quaternary structure, probably forms covalent oligomers. In testis, primarily in haploid spermatids.

The protein localises to the cell membrane. Its function is as follows. Binds in a species-specific manner to the zona pellucida of the egg. May be involved in gamete recognition and/or signaling. In Homo sapiens (Human), this protein is Zonadhesin (ZAN).